Here is a 139-residue protein sequence, read N- to C-terminus: ATP synthase epsilon chain (139 aa).

It belongs to the ATPase epsilon chain family. F-type ATPases have 2 components, CF(1) - the catalytic core - and CF(0) - the membrane proton channel. CF(1) has five subunits: alpha(3), beta(3), gamma(1), delta(1), epsilon(1). CF(0) has three main subunits: a, b and c.

It localises to the cell inner membrane. Its function is as follows. Produces ATP from ADP in the presence of a proton gradient across the membrane. In Pseudomonas putida (strain ATCC 700007 / DSM 6899 / JCM 31910 / BCRC 17059 / LMG 24140 / F1), this protein is ATP synthase epsilon chain.